Here is a 164-residue protein sequence, read N- to C-terminus: NADH-quinone oxidoreductase subunit I 1 (164 aa).

2 consecutive 4Fe-4S ferredoxin-type domains span residues 54–84 and 95–124; these read LRRYPNGEERCIACKLCEAICPAQAITIEAG and VRYDIDMVKCIYCGFCQEACPVDAIVEGPN. [4Fe-4S] cluster contacts are provided by Cys64, Cys67, Cys70, Cys74, Cys104, Cys107, Cys110, and Cys114.

It belongs to the complex I 23 kDa subunit family. As to quaternary structure, NDH-1 is composed of 14 different subunits. Subunits NuoA, H, J, K, L, M, N constitute the membrane sector of the complex. It depends on [4Fe-4S] cluster as a cofactor.

The protein resides in the cell inner membrane. It catalyses the reaction a quinone + NADH + 5 H(+)(in) = a quinol + NAD(+) + 4 H(+)(out). NDH-1 shuttles electrons from NADH, via FMN and iron-sulfur (Fe-S) centers, to quinones in the respiratory chain. The immediate electron acceptor for the enzyme in this species is believed to be ubiquinone. Couples the redox reaction to proton translocation (for every two electrons transferred, four hydrogen ions are translocated across the cytoplasmic membrane), and thus conserves the redox energy in a proton gradient. The polypeptide is NADH-quinone oxidoreductase subunit I 1 (Rhizobium meliloti (strain 1021) (Ensifer meliloti)).